The sequence spans 108 residues: UPF0145 protein Npun_F4817 (108 aa).

It belongs to the UPF0145 family.

In Nostoc punctiforme (strain ATCC 29133 / PCC 73102), this protein is UPF0145 protein Npun_F4817.